Consider the following 227-residue polypeptide: Cytochrome c oxidase subunit 2 (227 aa).

Residues 1–14 lie on the Mitochondrial intermembrane side of the membrane; it reads MAYPFQLGLQDATS. Residues 15 to 45 form a helical membrane-spanning segment; it reads PIMEELLHFHDHTLMIVFLISSLVLYIISLM. The Mitochondrial matrix portion of the chain corresponds to 46–59; it reads LTTKLTHTSTMDAQ. The chain crosses the membrane as a helical span at residues 60 to 87; the sequence is EVETVWTILPAIILVLIALPSLRILYMM. At 88 to 227 the chain is on the mitochondrial intermembrane side; it reads DEINNPSLTV…YFETWSALMV (140 aa). Residues His161, Cys196, Glu198, Cys200, His204, and Met207 each contribute to the Cu cation site. Glu198 contributes to the Mg(2+) binding site. Tyr218 bears the Phosphotyrosine mark.

Belongs to the cytochrome c oxidase subunit 2 family. Component of the cytochrome c oxidase (complex IV, CIV), a multisubunit enzyme composed of 14 subunits. The complex is composed of a catalytic core of 3 subunits MT-CO1, MT-CO2 and MT-CO3, encoded in the mitochondrial DNA, and 11 supernumerary subunits COX4I, COX5A, COX5B, COX6A, COX6B, COX6C, COX7A, COX7B, COX7C, COX8 and NDUFA4, which are encoded in the nuclear genome. The complex exists as a monomer or a dimer and forms supercomplexes (SCs) in the inner mitochondrial membrane with NADH-ubiquinone oxidoreductase (complex I, CI) and ubiquinol-cytochrome c oxidoreductase (cytochrome b-c1 complex, complex III, CIII), resulting in different assemblies (supercomplex SCI(1)III(2)IV(1) and megacomplex MCI(2)III(2)IV(2)). Found in a complex with TMEM177, COA6, COX18, COX20, SCO1 and SCO2. Interacts with TMEM177 in a COX20-dependent manner. Interacts with COX20. Interacts with COX16. It depends on Cu cation as a cofactor.

It is found in the mitochondrion inner membrane. It catalyses the reaction 4 Fe(II)-[cytochrome c] + O2 + 8 H(+)(in) = 4 Fe(III)-[cytochrome c] + 2 H2O + 4 H(+)(out). Component of the cytochrome c oxidase, the last enzyme in the mitochondrial electron transport chain which drives oxidative phosphorylation. The respiratory chain contains 3 multisubunit complexes succinate dehydrogenase (complex II, CII), ubiquinol-cytochrome c oxidoreductase (cytochrome b-c1 complex, complex III, CIII) and cytochrome c oxidase (complex IV, CIV), that cooperate to transfer electrons derived from NADH and succinate to molecular oxygen, creating an electrochemical gradient over the inner membrane that drives transmembrane transport and the ATP synthase. Cytochrome c oxidase is the component of the respiratory chain that catalyzes the reduction of oxygen to water. Electrons originating from reduced cytochrome c in the intermembrane space (IMS) are transferred via the dinuclear copper A center (CU(A)) of subunit 2 and heme A of subunit 1 to the active site in subunit 1, a binuclear center (BNC) formed by heme A3 and copper B (CU(B)). The BNC reduces molecular oxygen to 2 water molecules using 4 electrons from cytochrome c in the IMS and 4 protons from the mitochondrial matrix. The polypeptide is Cytochrome c oxidase subunit 2 (MT-CO2) (Cerdocyon thous (Crab-eating fox)).